The chain runs to 271 residues: Solute carrier family 66 member 2 (271 aa).

Helical transmembrane passes span 7–27 (GWLL…AMVF), 49–69 (FSTH…LFWF), and 72–92 (HFES…LLML). The PQ-loop 1 domain occupies 14–80 (HQLVSWVAAG…RHFESPLLWQ (67 aa)). Phosphoserine is present on S110. The next 3 membrane-spanning stretches (helical) occupy residues 145–165 (DYVQ…YLSI), 168–188 (ALFV…LGVP), and 232–252 (VCGL…YAFA). Residues 178–233 (AVLTEAMLGVPQLYRNYCHRSTEGMSLKMVLMWTSGDTFKTAYFLLNGAPLQFSVC) enclose the PQ-loop 2 domain.

It is found in the membrane. The chain is Solute carrier family 66 member 2 (Slc66a2) from Mus musculus (Mouse).